Consider the following 475-residue polypeptide: ATP synthase subunit beta, chloroplastic (475 aa).

Residue 156–163 participates in ATP binding; the sequence is GGAGVGKT.

Belongs to the ATPase alpha/beta chains family. In terms of assembly, F-type ATPases have 2 components, CF(1) - the catalytic core - and CF(0) - the membrane proton channel. CF(1) has five subunits: alpha(3), beta(3), gamma(1), delta(1), epsilon(1). CF(0) has four main subunits: a(1), b(1), b'(1) and c(9-12).

It localises to the plastid. The protein localises to the chloroplast thylakoid membrane. It carries out the reaction ATP + H2O + 4 H(+)(in) = ADP + phosphate + 5 H(+)(out). In terms of biological role, produces ATP from ADP in the presence of a proton gradient across the membrane. The catalytic sites are hosted primarily by the beta subunits. In Trieres chinensis (Marine centric diatom), this protein is ATP synthase subunit beta, chloroplastic.